Consider the following 120-residue polypeptide: Small ribosomal subunit protein uS17 (120 aa).

Over residues 1 to 22 the composition is skewed to low complexity; sequence MMAEAKTGAKATKSAAAGAADG. Residues 1–46 are disordered; the sequence is MMAEAKTGAKATKSAAAGAADGASKEKGPKHTPSPPKPSGRRKTRI.

The protein belongs to the universal ribosomal protein uS17 family. Part of the 30S ribosomal subunit.

Functionally, one of the primary rRNA binding proteins, it binds specifically to the 5'-end of 16S ribosomal RNA. This Mycobacterium ulcerans (strain Agy99) protein is Small ribosomal subunit protein uS17.